The following is a 246-amino-acid chain: Uridylate kinase (246 aa).

Residue 11–14 participates in ATP binding; that stretch reads KLSG. Gly-53 is a binding site for UMP. The ATP site is built by Gly-54 and Arg-58. Residues Asp-73 and 134–141 contribute to the UMP site; that span reads TGNPYFTT. Residues Thr-161, Tyr-167, and Asp-170 each contribute to the ATP site.

This sequence belongs to the UMP kinase family. As to quaternary structure, homohexamer.

Its subcellular location is the cytoplasm. It carries out the reaction UMP + ATP = UDP + ADP. The protein operates within pyrimidine metabolism; CTP biosynthesis via de novo pathway; UDP from UMP (UMPK route): step 1/1. Its activity is regulated as follows. Inhibited by UTP. Its function is as follows. Catalyzes the reversible phosphorylation of UMP to UDP. The protein is Uridylate kinase of Leptospira borgpetersenii serovar Hardjo-bovis (strain JB197).